The sequence spans 134 residues: Snaclec alboaggregin-A subunit alpha' (134 aa).

The C-type lectin domain occupies 1-134 (DFHCLPGWSA…NPFVCKFPPQ (134 aa)). Cystine bridges form between Cys4-Cys15, Cys32-Cys129, and Cys104-Cys121.

Belongs to the snaclec family. In terms of assembly, heterotetramer of the subunits alpha, alpha', beta and beta'; disulfide-linked. As to expression, expressed by the venom gland.

The protein localises to the secreted. Potent platelet activator that aggregates platelets via both GPIbalpha (GP1BA) and GPVI (GP6). Induces a tyrosine phosphorylation profile in platelets that resembles this produced by collagen, involving the time dependent tyrosine phosphorylation of Fc receptor gamma chain (FCGR1A), phospholipase Cgamma2 (PLCG2), and LAT. The sequence is that of Snaclec alboaggregin-A subunit alpha' from Trimeresurus albolabris (White-lipped pit viper).